Reading from the N-terminus, the 152-residue chain is Transcriptional repressor NrdR (152 aa).

The segment at 3–34 is a zinc-finger region; the sequence is CPKCGSLNDKVVDTRQSKDGTVIRRRRECLDC. The 91-residue stretch at 49-139 folds into the ATP-cone domain; that stretch reads IVVKKKNGTT…VYNEFQDIKD (91 aa).

The protein belongs to the NrdR family. Zn(2+) serves as cofactor.

Functionally, negatively regulates transcription of bacterial ribonucleotide reductase nrd genes and operons by binding to NrdR-boxes. The protein is Transcriptional repressor NrdR of Persephonella marina (strain DSM 14350 / EX-H1).